A 1132-amino-acid chain; its full sequence is Error-prone DNA polymerase (1132 aa).

Belongs to the DNA polymerase type-C family. DnaE2 subfamily.

The protein resides in the cytoplasm. It carries out the reaction DNA(n) + a 2'-deoxyribonucleoside 5'-triphosphate = DNA(n+1) + diphosphate. DNA polymerase involved in damage-induced mutagenesis and translesion synthesis (TLS). It is not the major replicative DNA polymerase. In Anaeromyxobacter dehalogenans (strain 2CP-C), this protein is Error-prone DNA polymerase.